A 113-amino-acid chain; its full sequence is Nucleoid-associated protein PMT_0025 (113 aa).

This sequence belongs to the YbaB/EbfC family. In terms of assembly, homodimer.

It is found in the cytoplasm. It localises to the nucleoid. In terms of biological role, binds to DNA and alters its conformation. May be involved in regulation of gene expression, nucleoid organization and DNA protection. This Prochlorococcus marinus (strain MIT 9313) protein is Nucleoid-associated protein PMT_0025.